We begin with the raw amino-acid sequence, 402 residues long: CinA-like protein (402 aa).

Belongs to the CinA family.

The protein is CinA-like protein of Deinococcus deserti (strain DSM 17065 / CIP 109153 / LMG 22923 / VCD115).